The sequence spans 593 residues: MVEQTVVREHIKARVMSLVRSAEPSSYRNPKLYTLNENGNNNGVSSAQIFDPDRSKNPCLTDDSYPSQSYEKYFLDSPTDEFVQHPIGSGASVSSFGSLDSFPYQSRPVLGCSMEFQLPLDSTSTSSTRLLGDYQAVSYSPSMDVVEEFDDEQMRSKIQELERALLGDEDDKMVGIDNLMEIDSEWSYQNESEQHQDSPKESSSADSNSHVSSKEVVSQATPKQILISCARALSEGKLEEALSMVNELRQIVSIQGDPSQRIAAYMVEGLAARMAASGKFIYRALKCKEPPSDERLAAMQVLFEVCPCFKFGFLAANGAILEAIKGEEEVHIIDFDINQGNQYMTLIRSIAELPGKRPRLRLTGIDDPESVQRSIGGLRIIGLRLEQLAEDNGVSFKFKAMPSKTSIVSPSTLGCKPGETLIVNFAFQLHHMPDESVTTVNQRDELLHMVKSLNPKLVTVVEQDVNTNTSPFFPRFIEAYEYYSAVFESLDMTLPRESQERMNVERQCLARDIVNIVACEGEERIERYEAAGKWRARMMMAGFNPKPMSAKVTNNIQNLIKQQYCNKYKLKEEMGELHFCWEEKSLIVASAWR.

Disordered stretches follow at residues 29–61 and 188–216; these read NPKL…PCLT and YQNE…SKEV. The segment covering 35 to 48 has biased composition (polar residues); sequence LNENGNNNGVSSAQ. Residues 202-211 show a composition bias toward low complexity; that stretch reads SSSADSNSHV. The 381-residue stretch at 213–593 folds into the GRAS domain; sequence SKEVVSQATP…KSLIVASAWR (381 aa). The leucine repeat I (LRI) stretch occupies residues 220 to 280; that stretch reads ATPKQILISC…AARMAASGKF (61 aa). The segment at 299-364 is VHIID; that stretch reads MQVLFEVCPC…GKRPRLRLTG (66 aa). A VHIID motif is present at residues 330 to 334; that stretch reads VHIID. The interval 380-411 is leucine repeat II (LRII); that stretch reads IIGLRLEQLAEDNGVSFKFKAMPSKTSIVSPS. Positions 421–515 are PFYRE; it reads LIVNFAFQLH…RQCLARDIVN (95 aa). The segment at 518–593 is SAW; it reads ACEGEERIER…KSLIVASAWR (76 aa).

This sequence belongs to the GRAS family. In terms of tissue distribution, expressed in seedlings, roots, shoots, leaves, flowers and siliques.

It localises to the nucleus. In terms of biological role, probable transcription factor involved in plant development. The sequence is that of Scarecrow-like protein 1 (SCL1) from Arabidopsis thaliana (Mouse-ear cress).